A 145-amino-acid polypeptide reads, in one-letter code: Meiotically up-regulated gene 124 protein (145 aa).

Transmembrane regions (helical) follow at residues 18-38 (IILT…CPSI) and 95-115 (FAWS…NFFL).

Its subcellular location is the membrane. Functionally, has a role in meiosis. In Schizosaccharomyces pombe (strain 972 / ATCC 24843) (Fission yeast), this protein is Meiotically up-regulated gene 124 protein (mug124).